The sequence spans 259 residues: UPF0246 protein PSPA7_1607 (259 aa).

Belongs to the UPF0246 family.

The chain is UPF0246 protein PSPA7_1607 from Pseudomonas paraeruginosa (strain DSM 24068 / PA7) (Pseudomonas aeruginosa (strain PA7)).